A 192-amino-acid polypeptide reads, in one-letter code: uncharacterized protein (192 aa).

The Nudix hydrolase domain maps to 29 to 160; it reads RRQAAVLIPV…PLDIYRRGDS (132 aa). Residues 67 to 89 carry the Nudix box motif; sequence GAVDSSDASLIAAALREAQEEVA. The Mg(2+) site is built by E83 and E87.

The protein belongs to the Nudix hydrolase family. PCD1 subfamily. Mn(2+) is required as a cofactor. Requires Mg(2+) as cofactor.

In terms of biological role, probably mediates the hydrolysis of some nucleoside diphosphate derivatives. This is an uncharacterized protein from Citrobacter koseri (strain ATCC BAA-895 / CDC 4225-83 / SGSC4696).